A 364-amino-acid polypeptide reads, in one-letter code: Cobalt-precorrin-5B C(1)-methyltransferase (364 aa).

Belongs to the CbiD family.

It carries out the reaction Co-precorrin-5B + S-adenosyl-L-methionine = Co-precorrin-6A + S-adenosyl-L-homocysteine. It participates in cofactor biosynthesis; adenosylcobalamin biosynthesis; cob(II)yrinate a,c-diamide from sirohydrochlorin (anaerobic route): step 6/10. Functionally, catalyzes the methylation of C-1 in cobalt-precorrin-5B to form cobalt-precorrin-6A. The protein is Cobalt-precorrin-5B C(1)-methyltransferase of Pseudomonas putida (strain GB-1).